The primary structure comprises 473 residues: Photosystem II CP43 reaction center protein (473 aa).

Residues Met1 to Glu14 constitute a propeptide that is removed on maturation. Position 15 is an N-acetylthreonine (Thr15). Phosphothreonine is present on Thr15. 5 helical membrane passes run Leu69–Ala93, Leu134–Asn155, Lys178–Thr200, Lys255–Ser275, and Trp291–Ala312. A [CaMn4O5] cluster-binding site is contributed by Glu367. Residues Arg447–Pro471 traverse the membrane as a helical segment.

This sequence belongs to the PsbB/PsbC family. PsbC subfamily. In terms of assembly, PSII is composed of 1 copy each of membrane proteins PsbA, PsbB, PsbC, PsbD, PsbE, PsbF, PsbH, PsbI, PsbJ, PsbK, PsbL, PsbM, PsbT, PsbX, PsbY, PsbZ, Psb30/Ycf12, at least 3 peripheral proteins of the oxygen-evolving complex and a large number of cofactors. It forms dimeric complexes. The cofactor is Binds multiple chlorophylls and provides some of the ligands for the Ca-4Mn-5O cluster of the oxygen-evolving complex. It may also provide a ligand for a Cl- that is required for oxygen evolution. PSII binds additional chlorophylls, carotenoids and specific lipids..

The protein localises to the plastid. Its subcellular location is the chloroplast thylakoid membrane. One of the components of the core complex of photosystem II (PSII). It binds chlorophyll and helps catalyze the primary light-induced photochemical processes of PSII. PSII is a light-driven water:plastoquinone oxidoreductase, using light energy to abstract electrons from H(2)O, generating O(2) and a proton gradient subsequently used for ATP formation. This Brachypodium distachyon (Purple false brome) protein is Photosystem II CP43 reaction center protein.